Consider the following 92-residue polypeptide: Small ribosomal subunit protein uS19 (92 aa).

The protein belongs to the universal ribosomal protein uS19 family.

Protein S19 forms a complex with S13 that binds strongly to the 16S ribosomal RNA. This chain is Small ribosomal subunit protein uS19, found in Phenylobacterium zucineum (strain HLK1).